Here is a 235-residue protein sequence, read N- to C-terminus: Voltage-gated hydrogen channel 1 (235 aa).

At 1 to 65 (MSRYLKHFTA…SLRKLYSTER (65 aa)) the chain is on the cytoplasmic side. Residues 66–86 (FQIVVVCLVVLDAIFVLCELL) form a helical membrane-spanning segment. At 87–103 (IDLSIIEADHHRIAPQV) the chain is on the extracellular side. Residues 104 to 126 (FHYLSLALLTFFMVELAGKIFAY) form a helical membrane-spanning segment. Over 127-134 (RLEFLHHK) the chain is Cytoplasmic. Residues 135–155 (FEVFDGIVVVVSFILDIIYIS) traverse the membrane as a helical segment. The Extracellular portion of the chain corresponds to 156–162 (KEDAFDA). The chain crosses the membrane as a helical span at residues 163–183 (MGLLILLRLWRVARIINGILV). Residues 184 to 235 (SVQNRANHRVEKLKEINESLVHQVNELKEQNTKMDQENVRLRALLKDHSIDF) lie on the Cytoplasmic side of the membrane. Positions 187–231 (NRANHRVEKLKEINESLVHQVNELKEQNTKMDQENVRLRALLKDH) form a coiled coil.

Belongs to the hydrogen channel family. As to quaternary structure, homodimer.

The protein resides in the membrane. It is found in the cell membrane. In terms of biological role, mediates the voltage-dependent proton permeability of excitable membranes. Forms a proton-selective channel through which protons may pass in accordance with their electrochemical gradient. This is Voltage-gated hydrogen channel 1 (hvcn1) from Danio rerio (Zebrafish).